The primary structure comprises 207 residues: Anthranilate synthase component II (207 aa).

A Glutamine amidotransferase type-1 domain is found at 17 to 207 (RVLFVDNFDS…DVIRNFLAGL (191 aa)). 66–68 (GPG) contributes to the L-glutamine binding site. Cysteine 96 (nucleophile; for GATase activity) is an active-site residue. L-glutamine is bound at residue 146–147 (SL). Catalysis depends on residues histidine 187 and glutamate 189.

As to quaternary structure, tetramer of two components I and two components II.

It carries out the reaction chorismate + L-glutamine = anthranilate + pyruvate + L-glutamate + H(+). It participates in amino-acid biosynthesis; L-tryptophan biosynthesis; L-tryptophan from chorismate: step 1/5. In Haloarcula marismortui (strain ATCC 43049 / DSM 3752 / JCM 8966 / VKM B-1809) (Halobacterium marismortui), this protein is Anthranilate synthase component II (trpG1).